Consider the following 338-residue polypeptide: MKKEFDFILIGRITIDFNPMDYYNNLENSSLFKKYIGGSAANIAIGLSRLKNKVGFFGSVSDDQFGNFVLNVFEKEKIDISHIKKTKDHKLGLTFTEMLSEEKSTILMYRDNVADLQIDVSDIDLDYILRTKILVISGTSLAKSPSREAVLKALFLAKNNGIKVVFDIDYRPYSWKNLDEVSLYYQIVAQNSDLIIGSYEEIQLTSRFCLENPENLIDDDYAKYWLKFVDLIIIKNGKKGSKLYQKDKKLVAKVVPVKMLKGYGGGDAYASLFLDHYLKNESDLENGLALATSAASIMVQSHSSFDLPDYQKILEFKDNALKSDPDLVQKKEWNAFKK.

The protein belongs to the carbohydrate kinase PfkB family.

The catalysed reaction is 5-dehydro-2-deoxy-D-gluconate + ATP = 6-phospho-5-dehydro-2-deoxy-D-gluconate + ADP + H(+). The protein operates within polyol metabolism; myo-inositol degradation into acetyl-CoA; acetyl-CoA from myo-inositol: step 5/7. Functionally, catalyzes the phosphorylation of 5-dehydro-2-deoxy-D-gluconate (2-deoxy-5-keto-D-gluconate or DKG) to 6-phospho-5-dehydro-2-deoxy-D-gluconate (DKGP). In Mesomycoplasma hyopneumoniae (strain 232) (Mycoplasma hyopneumoniae), this protein is 5-dehydro-2-deoxygluconokinase.